A 201-amino-acid polypeptide reads, in one-letter code: Dermatopontin (201 aa).

An N-terminal signal peptide occupies residues 1-18 (MDLTLLWVLLPLVTVAWG). Position 19 is a pyrrolidone carboxylic acid (glutamine 19). Sulfotyrosine is present on tyrosine 23. A run of 4 repeats spans residues 26–79 (SYHQ…ACMP), 70–75 (DRQWNY), 80–135 (TPQS…CCRY), and 125–130 (DREWQF). Residues 26–135 (SYHQYHDYSD…REWQFYCCRY (110 aa)) are 2 X 53-55 AA tandem repeats. Intrachain disulfides connect cysteine 50/cysteine 77, cysteine 90/cysteine 132, cysteine 106/cysteine 133, cysteine 139/cysteine 196, and cysteine 143/cysteine 189. The 3 X 6 AA tandem repeats of D-R-[EQ]-W-[NQK]-[FY] stretch occupies residues 70-186 (DRQWNYACMP…AVERDRQWKF (117 aa)). Sulfotyrosine occurs at positions 162, 164, 166, and 167. The stretch at 181-186 (DRQWKF) is one 2-3 repeat. The residue at position 194 (tyrosine 194) is a Sulfotyrosine.

It belongs to the dermatopontin family. Interacts with TGFB1, DCN and collagen. Sulfated on tyrosine residue(s). As to expression, expressed in skeletal muscle, heart, pancreas, skin and cultured fibroblasts.

The protein resides in the secreted. It localises to the extracellular space. Its subcellular location is the extracellular matrix. Functionally, seems to mediate adhesion by cell surface integrin binding. May serve as a communication link between the dermal fibroblast cell surface and its extracellular matrix environment. Enhances TGFB1 activity. Inhibits cell proliferation. Accelerates collagen fibril formation, and stabilizes collagen fibrils against low-temperature dissociation. This Bos taurus (Bovine) protein is Dermatopontin (DPT).